The sequence spans 70 residues: Small ribosomal subunit protein bS21 (70 aa).

It belongs to the bacterial ribosomal protein bS21 family.

The chain is Small ribosomal subunit protein bS21 from Nautilia profundicola (strain ATCC BAA-1463 / DSM 18972 / AmH).